Here is a 266-residue protein sequence, read N- to C-terminus: MKDIKVIIAGPRGRMGHEAVLLMERTPHFQFVAAVDYKHGGEKISDLPGMPALDVPIYEDLHTCLDEIEADVLLDLTTPEVGKKHVTLAVEHGLRSVIGTTGFTEEELQHLTNIAKEKEVGTIIAPNFAIGAVLMMKFSQMAAKYFQDVEIIELHHDQKLDAPSGTAVKTVDLIRQHREPKQQGHPNETEQLKGVRGANVDGIHIHSVRLPGLIAHQEVLFGGDGQMLTVRHDSFNRASFMSGVKLSIETVMNLDHLVYGLENIMD.

An NAD(+)-binding site is contributed by 10 to 15; sequence GPRGRM. Lys38 lines the NADP(+) pocket. NAD(+)-binding positions include 99 to 101 and 125 to 128; these read GTT and APNF. Catalysis depends on His155, which acts as the Proton donor/acceptor. His156 provides a ligand contact to (S)-2,3,4,5-tetrahydrodipicolinate. Lys159 (proton donor) is an active-site residue. (S)-2,3,4,5-tetrahydrodipicolinate is bound at residue 165-166; the sequence is GT.

This sequence belongs to the DapB family.

It localises to the cytoplasm. The enzyme catalyses (S)-2,3,4,5-tetrahydrodipicolinate + NAD(+) + H2O = (2S,4S)-4-hydroxy-2,3,4,5-tetrahydrodipicolinate + NADH + H(+). It carries out the reaction (S)-2,3,4,5-tetrahydrodipicolinate + NADP(+) + H2O = (2S,4S)-4-hydroxy-2,3,4,5-tetrahydrodipicolinate + NADPH + H(+). Its pathway is amino-acid biosynthesis; L-lysine biosynthesis via DAP pathway; (S)-tetrahydrodipicolinate from L-aspartate: step 4/4. Its function is as follows. Catalyzes the conversion of 4-hydroxy-tetrahydrodipicolinate (HTPA) to tetrahydrodipicolinate. This is 4-hydroxy-tetrahydrodipicolinate reductase from Bacillus cytotoxicus (strain DSM 22905 / CIP 110041 / 391-98 / NVH 391-98).